Here is a 545-residue protein sequence, read N- to C-terminus: Phenylalanine--tRNA ligase beta subunit (545 aa).

A B5 domain is found at phenylalanine 268–proline 343. Residues aspartate 321, aspartate 327, glutamate 330, and aspartate 331 each contribute to the Mg(2+) site.

Belongs to the phenylalanyl-tRNA synthetase beta subunit family. Type 2 subfamily. In terms of assembly, tetramer of two alpha and two beta subunits. Mg(2+) is required as a cofactor.

Its subcellular location is the cytoplasm. It carries out the reaction tRNA(Phe) + L-phenylalanine + ATP = L-phenylalanyl-tRNA(Phe) + AMP + diphosphate + H(+). The polypeptide is Phenylalanine--tRNA ligase beta subunit (Saccharolobus islandicus (strain M.14.25 / Kamchatka #1) (Sulfolobus islandicus)).